Consider the following 355-residue polypeptide: Probable sugar phosphate/phosphate translocator At3g10290 (355 aa).

A disordered region spans residues 19 to 51; it reads QKKQPNLSISSTTKMNKKNPDQKSDMSSSSSSP. The segment covering 22-32 has biased composition (polar residues); the sequence is QPNLSISSTTK. Helical transmembrane passes span 55-75, 89-109, 124-144, 150-170, 177-197, 198-218, 239-259, 277-297, 305-325, and 328-348; these read TLFI…VLLL, IFLT…SIVF, FLKV…GNIS, VSFN…FAYI, AWVT…ASGG, EPGF…ARAF, LMLY…IFME, YILL…NFLV, TLQV…ILLF, and PVTV…VAYG.

This sequence belongs to the TPT transporter family. TPT (TC 2.A.7.9) subfamily.

It is found in the membrane. This is Probable sugar phosphate/phosphate translocator At3g10290 from Arabidopsis thaliana (Mouse-ear cress).